Here is a 474-residue protein sequence, read N- to C-terminus: Proline--tRNA ligase (474 aa).

Belongs to the class-II aminoacyl-tRNA synthetase family. ProS type 3 subfamily. In terms of assembly, homodimer.

The protein localises to the cytoplasm. The enzyme catalyses tRNA(Pro) + L-proline + ATP = L-prolyl-tRNA(Pro) + AMP + diphosphate. Its function is as follows. Catalyzes the attachment of proline to tRNA(Pro) in a two-step reaction: proline is first activated by ATP to form Pro-AMP and then transferred to the acceptor end of tRNA(Pro). This chain is Proline--tRNA ligase, found in Onion yellows phytoplasma (strain OY-M).